Consider the following 395-residue polypeptide: Glutamate N-acetyltransferase (395 aa).

Residues T146, K169, T180, E263, N390, and T395 each contribute to the substrate site. The active-site Nucleophile is the T180.

Belongs to the ArgJ family. As to quaternary structure, heterotetramer of two alpha and two beta chains.

Its subcellular location is the cytoplasm. The enzyme catalyses N(2)-acetyl-L-ornithine + L-glutamate = N-acetyl-L-glutamate + L-ornithine. The protein operates within amino-acid biosynthesis; L-arginine biosynthesis; L-ornithine and N-acetyl-L-glutamate from L-glutamate and N(2)-acetyl-L-ornithine (cyclic): step 1/1. Catalyzes the transfer of the acetyl group from N(2)-acetylornithine to glutamate, forming N-acetylglutamate and L-ornithine. This is Glutamate N-acetyltransferase from Methanosarcina acetivorans (strain ATCC 35395 / DSM 2834 / JCM 12185 / C2A).